The sequence spans 149 residues: Large ribosomal subunit protein bL9 (149 aa).

The protein belongs to the bacterial ribosomal protein bL9 family.

In terms of biological role, binds to the 23S rRNA. The chain is Large ribosomal subunit protein bL9 from Vibrio vulnificus (strain CMCP6).